Reading from the N-terminus, the 324-residue chain is Geranylgeranyl pyrophosphate synthase dpmpD (324 aa).

Residues lysine 50, arginine 53, and histidine 82 each contribute to the isopentenyl diphosphate site. Mg(2+)-binding residues include aspartate 89 and aspartate 93. Arginine 98 lines the dimethylallyl diphosphate pocket. Arginine 99 is a binding site for isopentenyl diphosphate. Residues lysine 176, threonine 177, and glutamine 210 each coordinate dimethylallyl diphosphate. Aspartate 213 is a binding site for Mg(2+). 3 residues coordinate dimethylallyl diphosphate: asparagine 217, lysine 227, and lysine 237.

This sequence belongs to the FPP/GGPP synthase family. Mg(2+) is required as a cofactor.

It catalyses the reaction isopentenyl diphosphate + dimethylallyl diphosphate = (2E)-geranyl diphosphate + diphosphate. It carries out the reaction isopentenyl diphosphate + (2E)-geranyl diphosphate = (2E,6E)-farnesyl diphosphate + diphosphate. The enzyme catalyses isopentenyl diphosphate + (2E,6E)-farnesyl diphosphate = (2E,6E,10E)-geranylgeranyl diphosphate + diphosphate. Its pathway is secondary metabolite biosynthesis; terpenoid biosynthesis. Geranylgeranyl pyrophosphate synthase; part of the gene cluster that mediates the biosynthesis of diterpenoid pyrones. The first step of the pathway is the synthesis of the alpha-pyrone moiety by the polyketide synthase dpmpA via condensation of one acetyl-CoA starter unit with 3 malonyl-CoA units and 2 methylations. The alpha-pyrone is then combined with geranylgeranyl pyrophosphate (GGPP) formed by the GGPP synthase dpmpD through the action of the prenyltransferase dpmpC to yield a linear alpha-pyrone diterpenoid. Subsequent steps in the diterpenoid pyrone biosynthetic pathway involve the decalin core formation, which is initiated by the epoxidation of the C10-C11 olefin by the FAD-dependent oxidoreductase dpmpE, and is followed by a cyclization cascade catalyzed by the terpene cyclase dpmpB. The short chain dehydrogenase/reductase dpmpG then oxidizes the 8S hydroxy group to a ketone and the short chain dehydrogenase/reductase dpmpH reduces the ketone to the 8R hydroxy group to yield higginsianin B. Higginsianin B is further methylated by the methyltransferase dpmpI to produce the intermediate named FDDP B. The cytochrome P450 monooxygenase dpmpJ then oxidizes the C-26 methyl to primary alcohol, producing the final diterpenoid pyrone with a C-26 primary alcohol on the gamma-pyrone moiety named FDDP C. The polypeptide is Geranylgeranyl pyrophosphate synthase dpmpD (Macrophomina phaseolina (strain MS6) (Charcoal rot fungus)).